The sequence spans 652 residues: Tetracycline resistance protein TetP (652 aa).

The 251-residue stretch at 2-252 (KKIINIGIVA…CSYFPFASND (251 aa)) folds into the tr-type G domain. Residues 11 to 18 (AHVDAGKT), 75 to 79 (DTPGH), and 129 to 132 (NKLD) each bind GTP.

This sequence belongs to the TRAFAC class translation factor GTPase superfamily. Classic translation factor GTPase family. TetM/TetO subfamily.

In terms of biological role, abolishes the inhibitory effect of tetracyclin on protein synthesis by a non-covalent modification of the ribosomes. The protein is Tetracycline resistance protein TetP (tetP) of Clostridium perfringens.